We begin with the raw amino-acid sequence, 478 residues long: Sedoheptulokinase (478 aa).

It belongs to the FGGY kinase family. As to expression, strongly expressed in liver, kidney and pancreas. Expressed at lower levels in placenta and heart. Very weakly expressed in lung and brain.

Its subcellular location is the cytoplasm. The enzyme catalyses sedoheptulose + ATP = D-sedoheptulose 7-phosphate + ADP + H(+). Functionally, acts as a modulator of macrophage activation through control of glucose metabolism. This is Sedoheptulokinase from Homo sapiens (Human).